We begin with the raw amino-acid sequence, 153 residues long: Transcriptional repressor NrdR (153 aa).

A zinc finger lies at 3-34; it reads CPSCSHNGTRVLDSRPVDEGRSIRRRRECESC. Positions 49–139 constitute an ATP-cone domain; the sequence is LIVVKKEGTR…VYRQFKDLNV (91 aa).

This sequence belongs to the NrdR family. Zn(2+) serves as cofactor.

In terms of biological role, negatively regulates transcription of bacterial ribonucleotide reductase nrd genes and operons by binding to NrdR-boxes. In Bacillus anthracis (strain A0248), this protein is Transcriptional repressor NrdR.